The following is a 330-amino-acid chain: uncharacterized protein (330 aa).

The active site involves His257.

It belongs to the IUNH family.

This is an uncharacterized protein from Schizosaccharomyces pombe (strain 972 / ATCC 24843) (Fission yeast).